The following is a 280-amino-acid chain: Golgi phosphoprotein 3-like (280 aa).

Residues 1–30 (MTTLTRRGRRADVGQENRVDSEDYIKDKDE) form a disordered region. Positions 10–30 (RADVGQENRVDSEDYIKDKDE) are enriched in basic and acidic residues. Residues W62, R71, R152, and R155 each coordinate a 1,2-diacyl-sn-glycero-3-phospho-(1D-myo-inositol 4-phosphate). Positions 171-182 (EKQNFLLFDMTT) are beta-hairpin required for oligomerization.

This sequence belongs to the GOLPH3/VPS74 family. In terms of assembly, homooligomer.

The protein resides in the golgi apparatus. It localises to the golgi stack membrane. Its subcellular location is the trans-Golgi network membrane. Phosphatidylinositol-4-phosphate-binding protein that may play a role in the process of vesicle budding at the Golgi and anterograde transport to the plasma membrane. The sequence is that of Golgi phosphoprotein 3-like (golph3l) from Xenopus tropicalis (Western clawed frog).